The following is a 625-amino-acid chain: MTNNMNNYPLLSLINSPEDLRLLNKDQLPQLCQELRAYLLESVSQTSGHLASGLGTVELTVALHYVYKTPFDQLIWDVGHQAYPHKILTGRREQMSTIRQKDGIHPFPWREESEFDVLSVGHSSTSISAGLGIAVAAERENAGRKTVCVIGDGAITAGMAFEALNHAGALHTDMLVILNDNEMSISENVGALNNHLARIFSGSLYSTLRDGSKKILDKVPPIKNFMKKTEEHMKGVMFSPESTLFEELGFNYIGPVDGHNIDELVATLTNMRNLKGPQFLHIKTKKGKGYAPAEKDPIGFHGVPKFDPISGELPKNNSKPTYSKIFGDWLCEMAEKDAKIIGITPAMREGSGMVEFSQRFPKQYFDVAIAEQHAVTFATGLAIGGYKPVVAIYSTFLQRAYDQLIHDVAIQNLPVLFAIDRAGIVGADGATHQGAFDISFMRCIPNMIIMTPSDENECRQMLYTGYQCGKPAAVRYPRGNAVGVKLTPLEMLPIGKSRLIRKGQKIAILNFGTLLPSALELSEKLNATVVDMRFVKPIDIEMINVLAQTHDYLVTLEENAIQGGAGSAVAEVLNSSGKSTALLQLGLPDYFIPQATQQEALADLGLDTKGIEEKILNFIAKQGNL.

Thiamine diphosphate contacts are provided by residues histidine 80 and 121 to 123; that span reads GHS. Mg(2+) is bound at residue aspartate 152. Thiamine diphosphate contacts are provided by residues 153–154, asparagine 181, tyrosine 290, and glutamate 371; that span reads GA. Mg(2+) is bound at residue asparagine 181.

The protein belongs to the transketolase family. DXPS subfamily. In terms of assembly, homodimer. Mg(2+) serves as cofactor. Thiamine diphosphate is required as a cofactor.

It catalyses the reaction D-glyceraldehyde 3-phosphate + pyruvate + H(+) = 1-deoxy-D-xylulose 5-phosphate + CO2. The protein operates within metabolic intermediate biosynthesis; 1-deoxy-D-xylulose 5-phosphate biosynthesis; 1-deoxy-D-xylulose 5-phosphate from D-glyceraldehyde 3-phosphate and pyruvate: step 1/1. Functionally, catalyzes the acyloin condensation reaction between C atoms 2 and 3 of pyruvate and glyceraldehyde 3-phosphate to yield 1-deoxy-D-xylulose-5-phosphate (DXP). This Haemophilus influenzae (strain ATCC 51907 / DSM 11121 / KW20 / Rd) protein is 1-deoxy-D-xylulose-5-phosphate synthase.